The sequence spans 435 residues: ATP-dependent protease ATPase subunit HslU (435 aa).

ATP contacts are provided by residues isoleucine 18, 60–65 (GVGKTE), aspartate 248, glutamate 313, and arginine 385.

This sequence belongs to the ClpX chaperone family. HslU subfamily. In terms of assembly, a double ring-shaped homohexamer of HslV is capped on each side by a ring-shaped HslU homohexamer. The assembly of the HslU/HslV complex is dependent on binding of ATP.

The protein localises to the cytoplasm. Functionally, ATPase subunit of a proteasome-like degradation complex; this subunit has chaperone activity. The binding of ATP and its subsequent hydrolysis by HslU are essential for unfolding of protein substrates subsequently hydrolyzed by HslV. HslU recognizes the N-terminal part of its protein substrates and unfolds these before they are guided to HslV for hydrolysis. The polypeptide is ATP-dependent protease ATPase subunit HslU (Rhizobium leguminosarum bv. trifolii (strain WSM2304)).